Here is a 168-residue protein sequence, read N- to C-terminus: Small ribosomal subunit protein uS5 (168 aa).

In terms of domain architecture, S5 DRBM spans 13 to 76; that stretch reads IQEKLVAVRR…ENARRNMISV (64 aa).

It belongs to the universal ribosomal protein uS5 family. In terms of assembly, part of the 30S ribosomal subunit. Contacts proteins S4 and S8.

Functionally, with S4 and S12 plays an important role in translational accuracy. Its function is as follows. Located at the back of the 30S subunit body where it stabilizes the conformation of the head with respect to the body. This Coxiella burnetii (strain RSA 493 / Nine Mile phase I) protein is Small ribosomal subunit protein uS5.